Reading from the N-terminus, the 584-residue chain is Membrane frizzled-related protein (584 aa).

Residues 1-69 are Cytoplasmic-facing; the sequence is MKDYDDVILR…QPDCHFSWFC (69 aa). Residues 70–90 form a helical; Signal-anchor for type II membrane protein membrane-spanning segment; that stretch reads ILLLSGLLLLLLGLLVAVILA. The Extracellular segment spans residues 91–584; it reads QLQATSLPRT…AASLEACSQP (494 aa). The segment at 108–140 is disordered; it reads RGLTPMGVIPSTTPNTTTTTTTTTPARTGQQEA. Residues 119–132 show a composition bias toward low complexity; it reads TTPNTTTTTTTTTP. Cystine bridges form between Cys150-Cys176 and Cys203-Cys222. Residues 150 to 259 enclose the CUB 1 domain; it reads CGGLLPGPSG…SGFQAWYQAV (110 aa). Asn233 is a glycosylation site (N-linked (GlcNAc...) asparagine). The LDL-receptor class A 1 domain maps to 265–301; it reads SCAHNEFHCDLLLCLKRDSVCDGITECADGSDEANCS. Disulfide bonds link Cys266–Cys278, Cys273–Cys291, Cys285–Cys300, Cys307–Cys333, and Cys360–Cys383. The CUB 2 domain maps to 307-420; the sequence is CGGNLTGLYG…GGFLATYQAI (114 aa). Asn421 carries an N-linked (GlcNAc...) asparagine glycan. The 35-residue stretch at 426-460 folds into the LDL-receptor class A 2 domain; that stretch reads GCPWAEFCQSGGYRDLQWMCDLWKDCANDSNDNCS. 7 disulfide bridges follow: Cys433-Cys451, Cys445-Cys459, Cys471-Cys533, Cys479-Cys526, Cys517-Cys554, Cys543-Cys581, and Cys547-Cys569. Residue Asn458 is glycosylated (N-linked (GlcNAc...) asparagine). Residues 466–584 form the FZ domain; sequence QPDLTCEPVQ…AASLEACSQP (119 aa).

In terms of assembly, interacts with C1QTNF5. In terms of tissue distribution, expressed in retinal pigment epithelium and ciliary epithelium of the eye.

It is found in the apical cell membrane. Functionally, may play a role in eye development. The chain is Membrane frizzled-related protein (Mfrp) from Mus musculus (Mouse).